The chain runs to 132 residues: Small ribosomal subunit protein uS8 (132 aa).

Belongs to the universal ribosomal protein uS8 family. As to quaternary structure, part of the 30S ribosomal subunit. Contacts proteins S5 and S12.

One of the primary rRNA binding proteins, it binds directly to 16S rRNA central domain where it helps coordinate assembly of the platform of the 30S subunit. This chain is Small ribosomal subunit protein uS8, found in Mycolicibacterium gilvum (strain PYR-GCK) (Mycobacterium gilvum (strain PYR-GCK)).